Here is a 693-residue protein sequence, read N- to C-terminus: UvrABC system protein B (693 aa).

Residues 35–188 form the Helicase ATP-binding domain; that stretch reads ERIKNGEKDV…DDLLRKFVSM (154 aa). 48–55 contributes to the ATP binding site; sequence GATGTGKS. The Beta-hairpin motif lies at 101-124; the sequence is YYDYYQPEAYVAQTDTFIEKDSSV. The 167-residue stretch at 438-604 folds into the Helicase C-terminal domain; sequence QIDDLLGEIK…PLRKKIADIT (167 aa). The region spanning 648-683 is the UVR domain; sequence VGLIEQLTEQMHAAAGELQFELAARLRDEVGELKKE.

The protein belongs to the UvrB family. Forms a heterotetramer with UvrA during the search for lesions. Interacts with UvrC in an incision complex.

It localises to the cytoplasm. Functionally, the UvrABC repair system catalyzes the recognition and processing of DNA lesions. A damage recognition complex composed of 2 UvrA and 2 UvrB subunits scans DNA for abnormalities. Upon binding of the UvrA(2)B(2) complex to a putative damaged site, the DNA wraps around one UvrB monomer. DNA wrap is dependent on ATP binding by UvrB and probably causes local melting of the DNA helix, facilitating insertion of UvrB beta-hairpin between the DNA strands. Then UvrB probes one DNA strand for the presence of a lesion. If a lesion is found the UvrA subunits dissociate and the UvrB-DNA preincision complex is formed. This complex is subsequently bound by UvrC and the second UvrB is released. If no lesion is found, the DNA wraps around the other UvrB subunit that will check the other stand for damage. The protein is UvrABC system protein B of Arthrobacter sp. (strain FB24).